Here is a 664-residue protein sequence, read N- to C-terminus: Exoribonuclease 2 (664 aa).

Residues 193 to 521 (RIDMTHIPFV…INHRMLKALI (329 aa)) form the RNB domain. The S1 motif domain occupies 568–650 (QTLFTGEIFD…ENRSLVAKPT (83 aa)).

The protein belongs to the RNR ribonuclease family. RNase II subfamily.

It localises to the cytoplasm. It carries out the reaction Exonucleolytic cleavage in the 3'- to 5'-direction to yield nucleoside 5'-phosphates.. Involved in mRNA degradation. Hydrolyzes single-stranded polyribonucleotides processively in the 3' to 5' direction. In Vibrio vulnificus (strain CMCP6), this protein is Exoribonuclease 2.